Here is a 144-residue protein sequence, read N- to C-terminus: Large ribosomal subunit protein uL15 (144 aa).

A disordered region spans residues M1–G52. A compositionally biased stretch (gly residues) spans R21–A31.

This sequence belongs to the universal ribosomal protein uL15 family. As to quaternary structure, part of the 50S ribosomal subunit.

Its function is as follows. Binds to the 23S rRNA. The protein is Large ribosomal subunit protein uL15 of Yersinia pseudotuberculosis serotype O:1b (strain IP 31758).